Here is an 89-residue protein sequence, read N- to C-terminus: uncharacterized protein (89 aa).

This is an uncharacterized protein from Shigella flexneri.